The sequence spans 334 residues: Protein NlpD/LppB homolog (334 aa).

In terms of domain architecture, LysM spans 89–133 (IFYIVKSKDTMYSIAKNSGYNYHELSKFNSIKKPYKIIIGQKIWM).

Belongs to the E.coli NlpD/Haemophilus LppB family.

This Buchnera aphidicola subsp. Acyrthosiphon pisum (strain APS) (Acyrthosiphon pisum symbiotic bacterium) protein is Protein NlpD/LppB homolog.